The chain runs to 395 residues: Elongation factor Tu (395 aa).

The tr-type G domain occupies 6 to 205 (KPHINVGTIG…NALEKISLPT (200 aa)). The tract at residues 15-22 (GHVDHGKT) is G1. 15 to 22 (GHVDHGKT) contacts GTP. Threonine 22 contributes to the Mg(2+) binding site. The interval 59-63 (GITIS) is G2. The tract at residues 80-83 (DCPG) is G3. GTP-binding positions include 80–84 (DCPGH) and 135–138 (NKCD). The tract at residues 135 to 138 (NKCD) is G4. The interval 173–175 (SAV) is G5.

Belongs to the TRAFAC class translation factor GTPase superfamily. Classic translation factor GTPase family. EF-Tu/EF-1A subfamily. In terms of assembly, monomer.

It is found in the cytoplasm. It carries out the reaction GTP + H2O = GDP + phosphate + H(+). Functionally, GTP hydrolase that promotes the GTP-dependent binding of aminoacyl-tRNA to the A-site of ribosomes during protein biosynthesis. This chain is Elongation factor Tu, found in Ehrlichia chaffeensis (strain ATCC CRL-10679 / Arkansas).